An 803-amino-acid polypeptide reads, in one-letter code: MDAEMAAPALAAAHLLDSPMRPQVSRYYSKKRGSSHSRNGKDDANHDESKNQSPGLPLSRQSLSSSATHTYHTGGFYEIDHEKLPPKSPIHLKSIRVVKVSGYTSLDVTVSFPSLLALRSFFSSSPRSCTGPELDERFVMSSNHAARILRRRVAEEELAGDVMHQDSFWLVKPCLYDFSASSPHDVLTPSPPPATAQAKAPAASSCLLDTLKCDGAGWGVRRRVRYIGRHHDASKEASAASLDGYNTEVSVQEEQQQRLRLRLRLRQRREQEDNKSTSNGKRKREEAESSMDKSRAARKKKAKTYKSPKKVEKRRVVEAKDGDPRRGKDRWSAERYAAAERSLLDIMRSHGACFGAPVMRQALREEARKHIGDTGLLDHLLKHMAGRVPEGSADRFRRRHNADGAMEYWLEPAELAEVRRLAGVSDPYWVPPPGWKPGDDVSAVAGDLLVKKKVEELAEEVDGVKRHIEQLSSNLVQLEKETKSEAERSYSSRKEKYQKLMKANEKLEKQVLSMKDMYEHLVQKKGKLKKEVLSLKDKYKLVLEKNDKLEEQMASLSSSFLSLKEQLLLPRNGDNLNMERERVEVTLGKQEGLVPGEPLYVDGGDRISQQADATVVQVGEKRTARKSSFRICKPQGTFMWPHMASGTSMAISGGGSSSCPVASGPEQLPRSSSCPSIGPGGLPPSSRAPAEVVVASPLDEHVAFRGGFNTPPSASSTNAAAAAKLPPLPSPTSPLQTRALFAAGFTVPALHNFSGLTLRHVDSSSPSSAPCGAREKMVTLFDGDCRGISVVGTELALATPSYC.

Disordered stretches follow at residues 21-64 (RPQV…QSLS) and 264-333 (RLRQ…RWSA). Positions 39–50 (NGKDDANHDESK) are enriched in basic and acidic residues. A compositionally biased stretch (polar residues) spans 51-64 (NQSPGLPLSRQSLS). Residues 283–295 (KREEAESSMDKSR) show a composition bias toward basic and acidic residues. Residues 296–313 (AARKKKAKTYKSPKKVEK) show a composition bias toward basic residues. Basic and acidic residues predominate over residues 314–333 (RRVVEAKDGDPRRGKDRWSA). Positions 450–567 (VKKKVEELAE…SSFLSLKEQL (118 aa)) form a coiled coil. The interval 651 to 688 (ISGGGSSSCPVASGPEQLPRSSSCPSIGPGGLPPSSRA) is disordered.

It is found in the nucleus. The protein localises to the chromosome. Functionally, plays a fundamental role in building the proper chromosome structure at the beginning of meiosis in male meiocytes. Required for the transition from leptotene to zygotene in meiocytes. Required for homologous chromosome pairing. This chain is Protein AMEIOTIC 1 homolog, found in Oryza sativa subsp. japonica (Rice).